A 61-amino-acid polypeptide reads, in one-letter code: uncharacterized protein (61 aa).

2 consecutive transmembrane segments (helical) span residues 4–24 (IIAF…VASM) and 34–54 (SSVI…IMPM).

Its subcellular location is the cell membrane. This is an uncharacterized protein from Bacillus subtilis (strain 168).